We begin with the raw amino-acid sequence, 66 residues long: COP9 signalosome complex subunit 6a (66 aa).

Belongs to the peptidase M67A family. CSN6 subfamily. In terms of assembly, component of the CSN complex, probably composed of CSN1, CSN2, CSN3, CSN4, CSN5 (CSN5A or CSN5B), CSN6 (CSN6A or CSN6B), CSN7 and CSN8.

It localises to the cytoplasm. It is found in the nucleus. In terms of biological role, component of the COP9 signalosome complex (CSN), a complex involved in various cellular and developmental processes such as photomorphogenesis and auxin and jasmonate responses. The CSN complex is an essential regulator of the ubiquitin (Ubl) conjugation pathway by mediating the deneddylation of the cullin subunits of SCF-type E3 ligase complexes, leading to decrease the Ubl ligase activity of SCF. It is involved in repression of photomorphogenesis in darkness by regulating the activity of COP1-containing Ubl ligase complexes. In Brassica oleracea (Wild cabbage), this protein is COP9 signalosome complex subunit 6a (CSN6A).